The primary structure comprises 258 residues: Cytolethal distending toxin subunit A (258 aa).

A signal peptide spans 1–21 (MANKRTPIFIAGILIPILLNG). Residue C22 is the site of N-palmitoyl cysteine attachment. The S-diacylglycerol cysteine moiety is linked to residue C22. Residues 40 to 71 (VEGGPTVPSPDEPGLPLPGPGPALPTNGAIPI) are disordered. Positions 46-62 (VPSPDEPGLPLPGPGPA) are enriched in pro residues. A mediates binding to target cells region spans residues 93 to 104 (WSRGAGSSLWAY). One can recognise a Ricin B-type lectin domain in the interval 125–223 (RPNTIQFRNV…EKNFEFMWSI (99 aa)). A disordered region spans residues 236–258 (KPEIRPFPPQPIEPDEHSTGGEQ). Over residues 249–258 (PDEHSTGGEQ) the composition is skewed to basic and acidic residues.

Heterotrimer of 3 subunits, CdtA, CdtB and CdtC.

The protein resides in the cell outer membrane. Its function is as follows. CDTs are cytotoxins which induce host cell distension, growth arrest in G2/M phase, nucleus swelling, and chromatin fragmentation in HeLa cells. CdtA, along with CdtC, probably forms a heterodimeric subunit required for the delivery of CdtB. The polypeptide is Cytolethal distending toxin subunit A (cdtA) (Escherichia coli).